The sequence spans 55 residues: Large ribosomal subunit protein bL33 (55 aa).

This sequence belongs to the bacterial ribosomal protein bL33 family.

The chain is Large ribosomal subunit protein bL33 from Sodalis glossinidius (strain morsitans).